The chain runs to 119 residues: Host cell factor C1 regulator 1 (119 aa).

The tract at residues 1-34 (MILQQPLERGPQGRAQRDPRAASGASGGLDAREP) is disordered. The interval 57-60 (DHPY) is interaction with HCFC1. The Nuclear export signal signature appears at 91-100 (IPEALRLLRL).

Interacts with HCFC1.

It is found in the cytoplasm. The protein localises to the nucleus. Regulates HCFC1 activity by modulating its subcellular localization. Overexpression of HCFC1R1 leads to accumulation of HCFC1 in the cytoplasm. HCFC1R1-mediated export may provide the pool of cytoplasmic HCFC1 required for import of virion-derived VP16 into the nucleus. The polypeptide is Host cell factor C1 regulator 1 (HCFC1R1) (Bos taurus (Bovine)).